The following is a 536-amino-acid chain: 2-isopropylmalate synthase (536 aa).

Residues 8–273 form the Pyruvate carboxyltransferase domain; that stretch reads VLIFDTTLRD…FFGRDPESPT (266 aa). 4 residues coordinate Mn(2+): Asp-17, His-208, His-210, and Asn-244. The segment at 408–536 is regulatory domain; the sequence is QLQLVQVSCG…PQHDLIKANL (129 aa).

It belongs to the alpha-IPM synthase/homocitrate synthase family. LeuA type 1 subfamily. In terms of assembly, homodimer. Mn(2+) is required as a cofactor.

Its subcellular location is the cytoplasm. It carries out the reaction 3-methyl-2-oxobutanoate + acetyl-CoA + H2O = (2S)-2-isopropylmalate + CoA + H(+). It participates in amino-acid biosynthesis; L-leucine biosynthesis; L-leucine from 3-methyl-2-oxobutanoate: step 1/4. Its function is as follows. Catalyzes the condensation of the acetyl group of acetyl-CoA with 3-methyl-2-oxobutanoate (2-ketoisovalerate) to form 3-carboxy-3-hydroxy-4-methylpentanoate (2-isopropylmalate). In Prochlorococcus marinus (strain MIT 9211), this protein is 2-isopropylmalate synthase.